We begin with the raw amino-acid sequence, 300 residues long: B3 domain-containing protein At5g57720 (300 aa).

The segment at residues Pro11 to Gly105 is a DNA-binding region (TF-B3). The interval Lys115 to Glu142 is disordered. Residues Ile119 to Asp129 are compositionally biased toward acidic residues.

The protein resides in the nucleus. The polypeptide is B3 domain-containing protein At5g57720 (Arabidopsis thaliana (Mouse-ear cress)).